A 1453-amino-acid chain; its full sequence is Collagen alpha-1(I) chain (1453 aa).

The N-terminal stretch at 1–22 (MFSFVDLRLLLLLGATALLTHG) is a signal peptide. Residues 23 to 151 (QEDIPEVSCI…PPGLGGNFAS (129 aa)) constitute a propeptide, N-terminal propeptide. A VWFC domain is found at 29-87 (VSCIHNGLRVPNGETWKPDVCLICICHNGTAVCDGVLCKEDLDCPNPQKREGECCPFCP). A glycan (N-linked (GlcNAc...) asparagine) is linked at asparagine 56. The interval 97–1206 (VIGVEGPKGD…KSQDGGRYYR (1110 aa)) is disordered. Composition is skewed to pro residues over residues 109–118 (PQGPRGPVGP) and 128–143 (PGLPGPPGPPGPPGPP). Glutamine 152 carries the post-translational modification Pyrrolidone carboxylic acid. Residues 152–167 (QMSYGYDEKSAGVSVP) are nonhelical region (N-terminal). Allysine is present on lysine 160. Residue serine 161 is modified to Phosphoserine. The interval 168-1181 (GPMGPSGPRG…PGPPGPPGPP (1014 aa)) is triple-helical region. A 4-hydroxyproline mark is found at proline 179, proline 182, proline 185, proline 194, proline 197, proline 200, proline 215, proline 230, proline 236, proline 245, and proline 251. Positions 187-206 (PQGFQGPPGEPGEPGASGPM) are enriched in low complexity. A compositionally biased stretch (basic and acidic residues) spans 218–232 (NGDDGEAGKPGRPGE). At lysine 254 the chain carries 5-hydroxylysine; alternate. An O-linked (Gal...) hydroxylysine; alternate glycan is attached at lysine 254. Phosphoserine is present on serine 260. Residues proline 278, proline 281, proline 287, proline 296, and proline 302 each carry the 4-hydroxyproline modification. Low complexity predominate over residues 307–320 (SAGARGNDGAVGAA). Pro residues predominate over residues 322 to 334 (PPGPTGPTGPPGF). 4-hydroxyproline is present on residues proline 323, proline 332, proline 335, proline 362, proline 365, proline 377, proline 383, proline 392, proline 398, proline 401, and proline 416. Low complexity predominate over residues 335–361 (PGAAGAKGEAGPQGARGSEGPQGVRGE). Over residues 368–418 (AGAAGPAGNPGADGQPGAKGANGAPGIAGAPGFPGARGPSGPQGPSGAPGP) the composition is skewed to low complexity. Lysine 419 is modified (5-hydroxylysine). 8 positions are modified to 4-hydroxyproline: proline 425, proline 428, proline 440, proline 449, proline 464, proline 470, proline 479, and proline 485. The span at 474-483 (GERGGPGSRG) shows a compositional bias: gly residues. Lysine 494 is subject to 5-hydroxylysine. 4-hydroxyproline is present on residues proline 503, proline 512, proline 518, proline 524, proline 533, proline 536, proline 545, proline 554, proline 560, proline 572, proline 581, proline 590, proline 593, proline 611, proline 629, proline 635, proline 641, proline 647, proline 653, proline 659, proline 671, proline 680, proline 692, proline 704, proline 707, proline 713, proline 719, and proline 728. A compositionally biased stretch (low complexity) spans 527–566 (KGLTGSPGSPGPDGKTGPPGPAGQDGRPGPAGPPGARGQA). Low complexity predominate over residues 623 to 650 (QGPAGSPGFQGLPGPAGPPGEAGKPGEQ). Low complexity-rich tracts occupy residues 685–695 (PRGNNGAPGND) and 703–716 (APGAPGSQGAPGLQ). The Cell attachment site motif lies at 734-736 (RGD). Lysine 740 carries the 5-hydroxylysine modification. 4-hydroxyproline occurs at positions 746, 761, and 767. The segment covering 773-787 (TGPSGPAGPTGARGA) has biased composition (low complexity). Position 776 is a phosphoserine (serine 776). 4-hydroxyproline occurs at positions 788, 794, 797, 806, 812, 830, 839, and 848. Residues 800–815 (AGFAGPPGADGQPGAK) show a composition bias toward low complexity. Over residues 829-841 (PPGPAGPAGPPGP) the composition is skewed to pro residues. Over residues 842-872 (IGNVGAPGPKGSRGAAGPPGATGFPGAAGRV) the composition is skewed to low complexity. Lysine 851 is modified (5-hydroxylysine). 2 positions are modified to 4-hydroxyproline: proline 860 and proline 866. Position 874 is a 3-hydroxyproline (proline 874). 4-hydroxyproline is present on residues proline 875, proline 884, proline 887, proline 908, proline 917, proline 926, proline 935, proline 953, proline 962, proline 965, proline 971, proline 986, proline 992, proline 998, proline 1007, and proline 1013. Over residues 901–910 (ETGPAGRPGE) the composition is skewed to low complexity. A compositionally biased stretch (low complexity) spans 920–935 (AGEKGSPGADGPAGSP). Positions 985 to 995 (PPGPMGPPGLA) are enriched in pro residues. The segment covering 997–1012 (PPGESGREGSPGAEGS) has biased composition (low complexity). Lysine 1022 is modified (5-hydroxylysine). Residues 1031–1046 (AGPPGAPGAPGAPGPV) are compositionally biased toward pro residues. Proline 1034, proline 1037, and proline 1040 each carry 4-hydroxyproline. Residues 1067 to 1081 (IGPAGARGPAGPQGP) are compositionally biased toward low complexity. The Cell attachment site motif lies at 1082-1084 (RGD). A compositionally biased stretch (basic and acidic residues) spans 1082 to 1096 (RGDKGETGEQGDRGI). Lysine 1085 is modified (5-hydroxylysine). Lysine 1097 is modified (5-hydroxylysine; alternate). O-linked (Gal...) hydroxylysine; alternate glycosylation occurs at lysine 1097. Positions 1102 to 1148 (FSGLQGPPGSPGSPGEQGPSGASGPAGPRGPPGSAGSPGKDGLNGLP) are enriched in low complexity. 5 positions are modified to 4-hydroxyproline: proline 1109, proline 1112, proline 1115, proline 1133, and proline 1148. 3-hydroxyproline is present on proline 1153. At proline 1154 the chain carries 4-hydroxyproline. Pro residues predominate over residues 1166 to 1181 (AGPPGPPGPPGPPGPP). Proline 1168 bears the 3-hydroxyproline mark. At proline 1169 the chain carries 4-hydroxyproline. Proline 1171 carries the 3-hydroxyproline modification. Proline 1172 is subject to 4-hydroxyproline. Proline 1174 bears the 3-hydroxyproline mark. 3 positions are modified to 4-hydroxyproline: proline 1175, proline 1178, and proline 1181. Residues 1176–1186 (GPPGPPSGGYD) form a major antigenic determinant (of neutral salt-extracted rat skin collagen) region. The nonhelical region (C-terminal) stretch occupies residues 1182–1207 (SGGYDFSFLPQPPQEKSQDGGRYYRA). Allysine is present on lysine 1197. Positions 1197–1206 (KSQDGGRYYR) are enriched in basic and acidic residues. The propeptide at 1208–1453 (DDANVVRDRD…GMDIGPACFV (246 aa)) is C-terminal propeptide. The 236-residue stretch at 1218–1453 (LEVDTTLKSL…GMDIGPACFV (236 aa)) folds into the Fibrillar collagen NC1 domain. Intrachain disulfides connect cysteine 1248–cysteine 1280, cysteine 1288–cysteine 1451, and cysteine 1359–cysteine 1404. Positions 1266, 1268, 1269, 1271, and 1274 each coordinate Ca(2+). A glycan (N-linked (GlcNAc...) asparagine) is linked at asparagine 1354.

The protein belongs to the fibrillar collagen family. Trimers of one alpha 2(I) and two alpha 1(I) chains. Interacts with MRC2. Interacts with TRAM2. Interacts with MFAP4 in a Ca (2+)-dependent manner. In terms of processing, contains mostly 4-hydroxyproline. Proline residues at the third position of the tripeptide repeating unit (G-X-Y) are hydroxylated in some or all of the chains. Contains 3-hydroxyproline at a few sites. This modification occurs on the first proline residue in the sequence motif Gly-Pro-Hyp, where Hyp is 4-hydroxyproline. Post-translationally, lysine residues at the third position of the tripeptide repeating unit (G-X-Y) are 5-hydroxylated in some or all of the chains. In terms of processing, O-glycosylated on hydroxylated lysine residues. The O-linked glycan consists of a Glc-Gal disaccharide. Forms the fibrils of tendon, ligaments and bones. In bones the fibrils are mineralized with calcium hydroxyapatite.

Its subcellular location is the secreted. It is found in the extracellular space. The protein localises to the extracellular matrix. Type I collagen is a member of group I collagen (fibrillar forming collagen). This is Collagen alpha-1(I) chain (Col1a1) from Rattus norvegicus (Rat).